The chain runs to 60 residues: UPF0434 protein PC1_1771 (60 aa).

Belongs to the UPF0434 family.

This chain is UPF0434 protein PC1_1771, found in Pectobacterium carotovorum subsp. carotovorum (strain PC1).